Reading from the N-terminus, the 455-residue chain is Bifunctional protein GlmU (455 aa).

The tract at residues 1–226 (MSLDIVILAA…AMEVQGANDR (226 aa)) is pyrophosphorylase. Residues 8–11 (LAAG), Lys22, Gln73, 78–79 (GT), 99–101 (YGD), Gly136, Glu151, Asn166, and Asn224 contribute to the UDP-N-acetyl-alpha-D-glucosamine site. Residue Asp101 participates in Mg(2+) binding. Asn224 is a binding site for Mg(2+). The segment at 227 to 247 (RQLSELERHYQLREGRRLMAQ) is linker. Residues 248–455 (GVTLRDPARF…WKRPEKIKKS (208 aa)) are N-acetyltransferase. Residues Arg330 and Lys348 each contribute to the UDP-N-acetyl-alpha-D-glucosamine site. The Proton acceptor role is filled by His360. Positions 363 and 374 each coordinate UDP-N-acetyl-alpha-D-glucosamine. Residues Ala377, 383-384 (NY), Ser402, Ala420, and Arg437 each bind acetyl-CoA.

This sequence in the N-terminal section; belongs to the N-acetylglucosamine-1-phosphate uridyltransferase family. In the C-terminal section; belongs to the transferase hexapeptide repeat family. As to quaternary structure, homotrimer. It depends on Mg(2+) as a cofactor.

The protein localises to the cytoplasm. It catalyses the reaction alpha-D-glucosamine 1-phosphate + acetyl-CoA = N-acetyl-alpha-D-glucosamine 1-phosphate + CoA + H(+). It carries out the reaction N-acetyl-alpha-D-glucosamine 1-phosphate + UTP + H(+) = UDP-N-acetyl-alpha-D-glucosamine + diphosphate. The protein operates within nucleotide-sugar biosynthesis; UDP-N-acetyl-alpha-D-glucosamine biosynthesis; N-acetyl-alpha-D-glucosamine 1-phosphate from alpha-D-glucosamine 6-phosphate (route II): step 2/2. It participates in nucleotide-sugar biosynthesis; UDP-N-acetyl-alpha-D-glucosamine biosynthesis; UDP-N-acetyl-alpha-D-glucosamine from N-acetyl-alpha-D-glucosamine 1-phosphate: step 1/1. It functions in the pathway bacterial outer membrane biogenesis; LPS lipid A biosynthesis. In terms of biological role, catalyzes the last two sequential reactions in the de novo biosynthetic pathway for UDP-N-acetylglucosamine (UDP-GlcNAc). The C-terminal domain catalyzes the transfer of acetyl group from acetyl coenzyme A to glucosamine-1-phosphate (GlcN-1-P) to produce N-acetylglucosamine-1-phosphate (GlcNAc-1-P), which is converted into UDP-GlcNAc by the transfer of uridine 5-monophosphate (from uridine 5-triphosphate), a reaction catalyzed by the N-terminal domain. The chain is Bifunctional protein GlmU from Pseudomonas putida (strain ATCC 700007 / DSM 6899 / JCM 31910 / BCRC 17059 / LMG 24140 / F1).